We begin with the raw amino-acid sequence, 147 residues long: MQREEVTELIVLQKIRKQLSWAQLAEVIGQSKEWSTAAMLGQMTLTRAQAEAVGTALELPQEAIALLQVPPYKGSLPTAVPTDPLIYRFYELVSVYGTTFKALIHEEFGDGIMSAIDFNMDLTREPDPKGDRVRIVMSGKFLPYKTY.

Catalysis depends on residues arginine 88, glutamate 91, and serine 114.

This sequence belongs to the cyanase family.

It carries out the reaction cyanate + hydrogencarbonate + 3 H(+) = NH4(+) + 2 CO2. Catalyzes the reaction of cyanate with bicarbonate to produce ammonia and carbon dioxide. The protein is Cyanate hydratase of Ralstonia pickettii (strain 12J).